We begin with the raw amino-acid sequence, 603 residues long: Proline--tRNA ligase (603 aa).

This sequence belongs to the class-II aminoacyl-tRNA synthetase family. ProS type 1 subfamily. In terms of assembly, homodimer.

It is found in the cytoplasm. The catalysed reaction is tRNA(Pro) + L-proline + ATP = L-prolyl-tRNA(Pro) + AMP + diphosphate. Its function is as follows. Catalyzes the attachment of proline to tRNA(Pro) in a two-step reaction: proline is first activated by ATP to form Pro-AMP and then transferred to the acceptor end of tRNA(Pro). As ProRS can inadvertently accommodate and process non-cognate amino acids such as alanine and cysteine, to avoid such errors it has two additional distinct editing activities against alanine. One activity is designated as 'pretransfer' editing and involves the tRNA(Pro)-independent hydrolysis of activated Ala-AMP. The other activity is designated 'posttransfer' editing and involves deacylation of mischarged Ala-tRNA(Pro). The misacylated Cys-tRNA(Pro) is not edited by ProRS. The chain is Proline--tRNA ligase from Prochlorococcus marinus (strain SARG / CCMP1375 / SS120).